The chain runs to 345 residues: Gibberellin receptor GID1A (345 aa).

Alanine 2 carries the post-translational modification N-acetylalanine. Residues histidine 113–glycine 115 carry the Involved in the stabilization of the negatively charged intermediate by the formation of the oxyanion hole motif. Gibberellin A4-binding positions include glycine 115–serine 116, tyrosine 127, and serine 191. Residues serine 116, tyrosine 127, serine 191, and phenylalanine 238 each contribute to the gibberellin A3 site. Serine 191 is a catalytic residue. Aspartate 289 is an active-site residue. Glycine 320 provides a ligand contact to gibberellin A4. Glycine 320 serves as a coordination point for gibberellin A3.

It belongs to the 'GDXG' lipolytic enzyme family. As to quaternary structure, interacts (via N-terminus) with the DELLA proteins GAI, RGA, RGL1, RGL2 and RGL3 (via N-terminus) in a GA-dependent manner. As to expression, widely expressed.

It is found in the nucleus. Its function is as follows. Functions as a soluble gibberellin (GA) receptor. GA is an essential hormone that regulates growth and development in plants. Binds with high affinity the biologically active gibberellin GA4, but has no affinity for the biologically inactive GAs. In response to GA, interacts with specific DELLA proteins, known as repressors of GA-induced growth, and targets them for degradation via proteasome. Seems to be required for GA signaling that controls root growth, seed germination, stem elongation and flower development. Partially redundant with GID1B and GID1C. The sequence is that of Gibberellin receptor GID1A (GID1A) from Arabidopsis thaliana (Mouse-ear cress).